Reading from the N-terminus, the 130-residue chain is Hydrogenase maturation factor HypA (130 aa).

Residue His2 participates in Ni(2+) binding. Zn(2+)-binding residues include Cys74, Cys77, Cys90, and Cys93.

This sequence belongs to the HypA/HybF family.

Involved in the maturation of [NiFe] hydrogenases. Required for nickel insertion into the metal center of the hydrogenase. In Desulfatibacillum aliphaticivorans, this protein is Hydrogenase maturation factor HypA.